We begin with the raw amino-acid sequence, 370 residues long: Actin-related protein 2/3 complex subunit 1A-B (370 aa).

WD repeat units follow at residues 6-45 (FLLE…WVKC), 50-89 (EHNG…WKPT), 140-179 (PIRS…VDEK), 202-241 (SSGG…SVSQ), 244-284 (TEFL…TFVS), and 322-365 (LHQN…SYIQ).

Belongs to the WD repeat ARPC1 family. As to quaternary structure, component of the Arp2/3 complex.

It localises to the cytoplasm. It is found in the cytoskeleton. Its subcellular location is the nucleus. In terms of biological role, probably functions as a component of the Arp2/3 complex which is involved in regulation of actin polymerization and together with an activating nucleation-promoting factor (NPF) mediates the formation of branched actin networks. In addition to its role in the cytoplasmic cytoskeleton, the Arp2/3 complex also promotes actin polymerization in the nucleus, thereby regulating gene transcription and repair of damaged DNA. In Xenopus laevis (African clawed frog), this protein is Actin-related protein 2/3 complex subunit 1A-B (arpc1a-b).